An 899-amino-acid polypeptide reads, in one-letter code: Core protein VP3 (899 aa).

The segment at Met-1 to Ser-22 is disordered.

The protein belongs to the orbivirus VP3 family.

Its subcellular location is the virion. The VP3 protein is one of the five proteins (with VP1, VP4, VP6 and VP7) which form the inner capsid of the virus. This is Core protein VP3 (Segment-3) from Antilocapra americana (Pronghorn).